The sequence spans 315 residues: Small ribosomal subunit biogenesis GTPase RsgA (315 aa).

The CP-type G domain occupies 82–246 (DQFKSKVLAA…LIDSPGFQEF (165 aa)). Residues 130 to 133 (NKID) and 184 to 192 (GQSGMGKSS) each bind GTP. Residues cysteine 270, cysteine 275, histidine 277, and cysteine 283 each contribute to the Zn(2+) site.

This sequence belongs to the TRAFAC class YlqF/YawG GTPase family. RsgA subfamily. As to quaternary structure, monomer. Associates with 30S ribosomal subunit, binds 16S rRNA. The cofactor is Zn(2+).

The protein resides in the cytoplasm. One of several proteins that assist in the late maturation steps of the functional core of the 30S ribosomal subunit. Helps release RbfA from mature subunits. May play a role in the assembly of ribosomal proteins into the subunit. Circularly permuted GTPase that catalyzes slow GTP hydrolysis, GTPase activity is stimulated by the 30S ribosomal subunit. This is Small ribosomal subunit biogenesis GTPase RsgA from Ralstonia pickettii (strain 12J).